The sequence spans 129 residues: Keratin-associated protein 5-6 (129 aa).

A run of 6 repeats spans residues 28–31 (CCVP), 34–37 (CCKP), 40–43 (CCVP), 90–93 (CCKP), 109–112 (CCKP), and 119–122 (CCVP). The tract at residues 28–112 (CCVPICCCKP…SCCQSSCCKP (85 aa)) is 6 X 4 AA repeats of C-C-X-P.

Belongs to the KRTAP type 5 family. As to quaternary structure, interacts with hair keratins. As to expression, expressed in hair root and not in skin. Expressed also in liver and skeletal muscle.

Functionally, in the hair cortex, hair keratin intermediate filaments are embedded in an interfilamentous matrix, consisting of hair keratin-associated protein (KRTAP), which are essential for the formation of a rigid and resistant hair shaft through their extensive disulfide bond cross-linking with abundant cysteine residues of hair keratins. The matrix proteins include the high-sulfur and high-glycine-tyrosine keratins. This Homo sapiens (Human) protein is Keratin-associated protein 5-6 (KRTAP5-6).